The following is a 506-amino-acid chain: Lysine--tRNA ligase (506 aa).

Positions 416 and 423 each coordinate Mg(2+).

It belongs to the class-II aminoacyl-tRNA synthetase family. In terms of assembly, homodimer. Mg(2+) serves as cofactor.

It localises to the cytoplasm. The catalysed reaction is tRNA(Lys) + L-lysine + ATP = L-lysyl-tRNA(Lys) + AMP + diphosphate. The polypeptide is Lysine--tRNA ligase (Bordetella bronchiseptica (strain ATCC BAA-588 / NCTC 13252 / RB50) (Alcaligenes bronchisepticus)).